We begin with the raw amino-acid sequence, 564 residues long: Dihydroxy-acid dehydratase (564 aa).

C55 contacts [2Fe-2S] cluster. D87 contributes to the Mg(2+) binding site. C128 is a binding site for [2Fe-2S] cluster. Mg(2+) is bound by residues D129 and K130. At K130 the chain carries N6-carboxylysine. C200 contributes to the [2Fe-2S] cluster binding site. E452 is a binding site for Mg(2+). S478 serves as the catalytic Proton acceptor.

The protein belongs to the IlvD/Edd family. As to quaternary structure, homodimer. [2Fe-2S] cluster serves as cofactor. Mg(2+) is required as a cofactor.

It carries out the reaction (2R)-2,3-dihydroxy-3-methylbutanoate = 3-methyl-2-oxobutanoate + H2O. The catalysed reaction is (2R,3R)-2,3-dihydroxy-3-methylpentanoate = (S)-3-methyl-2-oxopentanoate + H2O. Its pathway is amino-acid biosynthesis; L-isoleucine biosynthesis; L-isoleucine from 2-oxobutanoate: step 3/4. It participates in amino-acid biosynthesis; L-valine biosynthesis; L-valine from pyruvate: step 3/4. Its function is as follows. Functions in the biosynthesis of branched-chain amino acids. Catalyzes the dehydration of (2R,3R)-2,3-dihydroxy-3-methylpentanoate (2,3-dihydroxy-3-methylvalerate) into 2-oxo-3-methylpentanoate (2-oxo-3-methylvalerate) and of (2R)-2,3-dihydroxy-3-methylbutanoate (2,3-dihydroxyisovalerate) into 2-oxo-3-methylbutanoate (2-oxoisovalerate), the penultimate precursor to L-isoleucine and L-valine, respectively. This Polaromonas naphthalenivorans (strain CJ2) protein is Dihydroxy-acid dehydratase.